The primary structure comprises 423 residues: Proline racemase A (423 aa).

An N-terminal signal peptide occupies residues 1–31; the sequence is MRKSVCPKQKFFFSAFPFFFFFCVFPLISRT. The Proton acceptor role is filled by cysteine 160. 161–162 contacts substrate; sequence GH. N-linked (GlcNAc...) asparagine glycosylation is found at asparagine 213, asparagine 266, and asparagine 282. Aspartate 326 contacts substrate. Residue cysteine 330 is the Proton donor of the active site. 331–332 is a binding site for substrate; it reads GT.

The protein belongs to the proline racemase family. As to quaternary structure, homodimer.

The protein resides in the secreted. The protein localises to the membrane. It localises to the cytoplasm. It carries out the reaction L-proline = D-proline. With respect to regulation, inhibited by maleic acid, iodoacetamide, iodoacetate and, most particularly, pyrrole-2-carboxylic acid. Its function is as follows. Catalyzes the interconversion of L- and D-proline. Secreted isoform 1 contributes to parasite immune evasion by acting as a B-cell mitogen. Probably involved in parasite differentiation and infectivity. This chain is Proline racemase A (PA45-A), found in Trypanosoma cruzi (strain CL Brener).